The chain runs to 203 residues: Peptidyl-tRNA hydrolase (203 aa).

Tyr-18 is a tRNA binding site. His-23 acts as the Proton acceptor in catalysis. Positions 69, 71, and 117 each coordinate tRNA.

This sequence belongs to the PTH family. Monomer.

The protein resides in the cytoplasm. It carries out the reaction an N-acyl-L-alpha-aminoacyl-tRNA + H2O = an N-acyl-L-amino acid + a tRNA + H(+). In terms of biological role, hydrolyzes ribosome-free peptidyl-tRNAs (with 1 or more amino acids incorporated), which drop off the ribosome during protein synthesis, or as a result of ribosome stalling. Its function is as follows. Catalyzes the release of premature peptidyl moieties from peptidyl-tRNA molecules trapped in stalled 50S ribosomal subunits, and thus maintains levels of free tRNAs and 50S ribosomes. This Parasynechococcus marenigrum (strain WH8102) protein is Peptidyl-tRNA hydrolase.